We begin with the raw amino-acid sequence, 255 residues long: Carboxy-S-adenosyl-L-methionine synthase (255 aa).

S-adenosyl-L-methionine contacts are provided by residues Y45, 70-72, 124-125, and N139; these read GCS and DI.

The protein belongs to the class I-like SAM-binding methyltransferase superfamily. Cx-SAM synthase family. As to quaternary structure, homodimer.

The enzyme catalyses prephenate + S-adenosyl-L-methionine = carboxy-S-adenosyl-L-methionine + 3-phenylpyruvate + H2O. Catalyzes the conversion of S-adenosyl-L-methionine (SAM) to carboxy-S-adenosyl-L-methionine (Cx-SAM). The protein is Carboxy-S-adenosyl-L-methionine synthase of Hamiltonella defensa subsp. Acyrthosiphon pisum (strain 5AT).